A 262-amino-acid polypeptide reads, in one-letter code: Demethyldecarbamoylnovobiocin O-methyltransferase (262 aa).

Residue 64–65 (TM) participates in S-adenosyl-L-methionine binding. The active-site Proton acceptor is the glutamate 72. Residues 92-96 (ETGVW), 122-126 (DSFQG), phenylalanine 178, 196-197 (DG), and serine 202 each bind S-adenosyl-L-methionine. Residue aspartate 196 coordinates Mg(2+). 2 residues coordinate Mg(2+): aspartate 223 and aspartate 224.

This sequence belongs to the methyltransferase TylF/MycF family. Homodimer. Mg(2+) is required as a cofactor.

It catalyses the reaction desmethyldescarbamoylnovobiocin + S-adenosyl-L-methionine = descarbamoylnovobiocin + S-adenosyl-L-homocysteine + H(+). It participates in antibiotic biosynthesis; novobiocin biosynthesis. In terms of biological role, S-adenosyl-L-methionine-dependent O-methyltransferase that methylates at 4-OH of the noviose moiety, the penultimate step in the novobiocin biosynthesis pathway. Novobiocin is an aminocoumarin family antibiotic that targets bacterial DNA gyrases. The sequence is that of Demethyldecarbamoylnovobiocin O-methyltransferase (novP) from Streptomyces niveus (Streptomyces spheroides).